A 387-amino-acid polypeptide reads, in one-letter code: Na(+)/H(+)-K(+) antiporter GerN (387 aa).

Helical transmembrane passes span 29–49 (PSVL…LGWI), 54–74 (LLTQ…GLET), 87–107 (LAVA…SGLV), 114–134 (NAVF…VQTL), 149–169 (LGAA…AMSF), 175–195 (VNLT…ILIG), 219–239 (ALII…AGII), 263–283 (PIAY…NITF), 290–310 (IWFI…GCGF), 324–344 (IIGA…GTGL), and 347–367 (GLLA…TTMI).

This sequence belongs to the monovalent cation:proton antiporter 2 (CPA2) transporter (TC 2.A.37) family.

It is found in the membrane. Its function is as follows. Na(+)/H(+) antiporter that extrudes sodium in exchange for external protons. Can also use potassium as a coupling ion, without completely replacing H(+). This Na(+)/H(+)-K(+) antiport is much more rapid than Na(+)/H(+) antiport. Can also extrude lithium. Important for the inosine-dependent germination of spores. This is Na(+)/H(+)-K(+) antiporter GerN (gerN) from Bacillus cereus.